The chain runs to 233 residues: Apoptosis regulator Bcl-2 (233 aa).

A BH4 motif is present at residues 10 to 30 (DNREIVLKYIHYKLSQRGYDW). The tract at residues 32 to 86 (AGEDRPPVPPAPAPAAAPAAVAAAGASSHHRPEPPGSAAASEVPPAEGLRPAPPG) is disordered. The BH3 signature appears at 87 to 101 (VHLALRQAGDEFSRR). Residues 130 to 149 (ELFRDGVNWGRIVAFFEFGG) carry the BH1 motif. Positions 181 to 196 (NWIQDNGGWDAFVELY) match the BH2 motif. Residues 208–228 (WISLKTILSLVLVGACITLGA) traverse the membrane as a helical segment.

This sequence belongs to the Bcl-2 family. Forms homodimers, and heterodimers with BAX, BAD, BAK and Bcl-X(L). Heterodimerization with BAX requires intact BH1 and BH2 motifs, and is necessary for anti-apoptotic activity. Also interacts with APAF1 and RAF-1. As to expression, in adult chicken expressed, in thymus, spleen, kidney, heart, ovary and brain, with the highest levels in the thymus. In the embryo, highly levels expressed in all tissues with high levels in the bursa of Fabricius.

The protein localises to the mitochondrion outer membrane. It is found in the nucleus membrane. Its subcellular location is the endoplasmic reticulum membrane. It localises to the cytoplasm. Functionally, suppresses apoptosis in a variety of cell systems including factor-dependent lymphohematopoietic and neural cells. Regulates cell death by controlling the mitochondrial membrane permeability. Appears to function in a feedback loop system with caspases. Inhibits caspase activity either by preventing the release of cytochrome c from the mitochondria and/or by binding to the apoptosis-activating factor (APAF-1). The chain is Apoptosis regulator Bcl-2 (BCL2) from Gallus gallus (Chicken).